Here is a 406-residue protein sequence, read N- to C-terminus: Accessory Sec system protein translocase subunit SecY2 (406 aa).

10 consecutive transmembrane segments (helical) span residues 14–34 (SWTVLFLFIYVLGSHLVLPFI), 63–83 (FSLFSVGLSPWMSAMILWQMF), 108–128 (FAIALIQSLAVSLSLPIEVGI), 131–151 (GLAILTNTILLIAGTFFLVWL), 156–176 (SFFGIGGSIVILMASMVANLP), 190–210 (LPIILSLIIMGLLFLYIAVIV), 246–266 (FMYAISLVSIPQYLLILIQIL), 285–305 (PIWLVLYQVVLFVLGIAFAFV), 344–364 (AVIGAIYTVIMAGGPMMIVLI), and 368–388 (YLQLSMIPGMFLIYSGMVYNV).

This sequence belongs to the SecY/SEC61-alpha family. SecY2 subfamily. Component of the accessory SecA2/SecY2 protein translocase complex required to export cell wall proteins. May form heterotrimers with SecE and SecG subunits.

Its subcellular location is the cell membrane. Part of the accessory SecA2/SecY2 system specifically required for export of possible cell wall proteins. The central subunit of a protein translocation channel. The chain is Accessory Sec system protein translocase subunit SecY2 from Streptococcus salivarius (strain CCHSS3).